Reading from the N-terminus, the 675-residue chain is Vitamin K-dependent protein S (675 aa).

The first 24 residues, 1-24, serve as a signal peptide directing secretion; that stretch reads MRVLGGRTGTLLACLALVLPVLEA. A propeptide spanning residues 25-41 is cleaved from the precursor; the sequence is NFLSRQHASQVLIRRRR. The Gla domain occupies 42 to 87; it reads ANTLLEETKKGNLERECIEELCNKEEAREIFENNPETEYFYPKYLG. Glutamate 47, glutamate 48, glutamate 55, glutamate 57, glutamate 60, glutamate 61, glutamate 66, glutamate 67, glutamate 70, glutamate 73, and glutamate 77 each carry 4-carboxyglutamate. The cysteines at positions 58 and 63 are disulfide-linked. Intrachain disulfides connect cysteine 88–cysteine 113, cysteine 121–cysteine 134, cysteine 126–cysteine 143, cysteine 145–cysteine 154, cysteine 161–cysteine 175, cysteine 171–cysteine 184, cysteine 186–cysteine 199, cysteine 205–cysteine 217, cysteine 212–cysteine 226, cysteine 228–cysteine 241, cysteine 247–cysteine 256, cysteine 252–cysteine 265, cysteine 267–cysteine 282, cysteine 288–cysteine 567, cysteine 449–cysteine 475, and cysteine 638–cysteine 665. A thrombin-sensitive region spans residues 88–116; sequence CLGSFRAGLFTAARLSTNAYPDLRSCVNA. The 39-residue stretch at 117–155 folds into the EGF-like 1 domain; that stretch reads ISDQCNPLPCNEDGFMTCKDGQATFTCICKSGWQGEKCE. Aspartate 136 bears the (3R)-3-hydroxyaspartate mark. Residues 157–200 enclose the EGF-like 2; calcium-binding domain; the sequence is DINECKDPVNINGGCSQICENTPGSYHCSCKNGFVMLSNKKDCK. Residue asparagine 177 is modified to (3R)-3-hydroxyasparagine. One can recognise an EGF-like 3; calcium-binding domain in the interval 201 to 242; sequence DVDECVLKPSICGTAVCKNIPGDFECECAEGYKYNPVSKSCD. A (3R)-3-hydroxyasparagine modification is found at asparagine 219. The EGF-like 4; calcium-binding domain occupies 243-283; sequence DVDECAENLCAQLCVNYPGGYSCYCDGKKGFKLAQDQKSCE. Asparagine 258 carries the (3R)-3-hydroxyasparagine modification. Laminin G-like domains are found at residues 299 to 475 and 484 to 665; these read LLYL…NKHC and YYPG…AHSC. Residues asparagine 499 and asparagine 509 are each glycosylated (N-linked (GlcNAc...) asparagine).

Post-translationally, the iron and 2-oxoglutarate dependent 3-hydroxylation of aspartate and asparagine is (R) stereospecific within EGF domains. As to expression, plasma.

The protein resides in the secreted. Anticoagulant plasma protein; it is a cofactor to activated protein C in the degradation of coagulation factors Va and VIIIa. It helps to prevent coagulation and stimulating fibrinolysis. The polypeptide is Vitamin K-dependent protein S (PROS1) (Bos taurus (Bovine)).